The sequence spans 305 residues: NAD kinase (305 aa).

Aspartate 88 (proton acceptor) is an active-site residue. Residues 88–89 (DG), arginine 93, 162–163 (NE), lysine 173, asparagine 192, 203–208 (TAYSFS), and glutamine 262 contribute to the NAD(+) site.

It belongs to the NAD kinase family. A divalent metal cation is required as a cofactor.

The protein localises to the cytoplasm. It catalyses the reaction NAD(+) + ATP = ADP + NADP(+) + H(+). Its function is as follows. Involved in the regulation of the intracellular balance of NAD and NADP, and is a key enzyme in the biosynthesis of NADP. Catalyzes specifically the phosphorylation on 2'-hydroxyl of the adenosine moiety of NAD to yield NADP. This Tropheryma whipplei (strain TW08/27) (Whipple's bacillus) protein is NAD kinase.